The primary structure comprises 412 residues: Aspartokinase (412 aa).

ACT domains follow at residues 266–340 (LTIR…GDTN) and 346–412 (IVGV…RQGE).

This sequence belongs to the aspartokinase family.

The enzyme catalyses L-aspartate + ATP = 4-phospho-L-aspartate + ADP. Its pathway is amino-acid biosynthesis; L-lysine biosynthesis via DAP pathway; (S)-tetrahydrodipicolinate from L-aspartate: step 1/4. The protein operates within amino-acid biosynthesis; L-methionine biosynthesis via de novo pathway; L-homoserine from L-aspartate: step 1/3. It functions in the pathway amino-acid biosynthesis; L-threonine biosynthesis; L-threonine from L-aspartate: step 1/5. The chain is Aspartokinase (lysC) from Pseudomonas aeruginosa (strain ATCC 15692 / DSM 22644 / CIP 104116 / JCM 14847 / LMG 12228 / 1C / PRS 101 / PAO1).